A 535-amino-acid chain; its full sequence is Bifunctional purine biosynthesis protein PurH (535 aa).

One can recognise an MGS-like domain in the interval 6–151; sequence TRLPVRRALI…KNHKDVAIVV (146 aa).

It belongs to the PurH family.

It carries out the reaction (6R)-10-formyltetrahydrofolate + 5-amino-1-(5-phospho-beta-D-ribosyl)imidazole-4-carboxamide = 5-formamido-1-(5-phospho-D-ribosyl)imidazole-4-carboxamide + (6S)-5,6,7,8-tetrahydrofolate. The catalysed reaction is IMP + H2O = 5-formamido-1-(5-phospho-D-ribosyl)imidazole-4-carboxamide. Its pathway is purine metabolism; IMP biosynthesis via de novo pathway; 5-formamido-1-(5-phospho-D-ribosyl)imidazole-4-carboxamide from 5-amino-1-(5-phospho-D-ribosyl)imidazole-4-carboxamide (10-formyl THF route): step 1/1. It functions in the pathway purine metabolism; IMP biosynthesis via de novo pathway; IMP from 5-formamido-1-(5-phospho-D-ribosyl)imidazole-4-carboxamide: step 1/1. In Pseudomonas putida (strain ATCC 700007 / DSM 6899 / JCM 31910 / BCRC 17059 / LMG 24140 / F1), this protein is Bifunctional purine biosynthesis protein PurH.